Reading from the N-terminus, the 576-residue chain is RING finger and SPRY domain-containing protein 1 (576 aa).

Residues 1-16 form the signal peptide; it reads MIVFGWAVFLASRSLG. Position 50 is a phosphoserine (S50). The segment at 50-99 is disordered; sequence SGTDDSVDTQQQQAENSAVPTADTRSQPRDPVRPPRRGRGPHEPRRKKQN. Residues 57–68 are compositionally biased toward polar residues; that stretch reads DTQQQQAENSAV. Basic residues predominate over residues 83–97; that stretch reads PPRRGRGPHEPRRKK. In terms of domain architecture, B30.2/SPRY spans 300–483; the sequence is LFLKEGRQLT…CEFNFGAKPF (184 aa). Residue N314 is glycosylated (N-linked (GlcNAc...) asparagine). Residues 527-562 form an RING-type zinc finger; it reads CSLCCDEVADTQLKPCGHSDLCMDCALQLETCPLCR.

The protein localises to the secreted. The polypeptide is RING finger and SPRY domain-containing protein 1 (RSPRY1) (Pongo abelii (Sumatran orangutan)).